A 190-amino-acid polypeptide reads, in one-letter code: Xanthine phosphoribosyltransferase (190 aa).

2 residues coordinate xanthine: Leu-20 and Asn-27. Residue 128–132 (ANGKA) coordinates 5-phospho-alpha-D-ribose 1-diphosphate. Lys-156 lines the xanthine pocket.

This sequence belongs to the purine/pyrimidine phosphoribosyltransferase family. Xpt subfamily. As to quaternary structure, homodimer.

It is found in the cytoplasm. The enzyme catalyses XMP + diphosphate = xanthine + 5-phospho-alpha-D-ribose 1-diphosphate. It functions in the pathway purine metabolism; XMP biosynthesis via salvage pathway; XMP from xanthine: step 1/1. Its function is as follows. Converts the preformed base xanthine, a product of nucleic acid breakdown, to xanthosine 5'-monophosphate (XMP), so it can be reused for RNA or DNA synthesis. The protein is Xanthine phosphoribosyltransferase of Stutzerimonas stutzeri (strain A1501) (Pseudomonas stutzeri).